The sequence spans 367 residues: Diphthine methyltransferase homolog (367 aa).

WD repeat units lie at residues 84-124, 132-173, 180-220, and 234-274; these read NFNS…KKLE, SLSN…SKVT, AHDY…NHND, and RCDM…QPII.

The protein belongs to the DPH7 family.

It carries out the reaction diphthine methyl ester-[translation elongation factor 2] + H2O = diphthine-[translation elongation factor 2] + methanol + H(+). Its pathway is protein modification; peptidyl-diphthamide biosynthesis. Functionally, catalyzes the demethylation of diphthine methyl ester to form diphthine, an intermediate diphthamide biosynthesis, a post-translational modification of histidine which occurs in translation elongation factor 2 (efbA). The polypeptide is Diphthine methyltransferase homolog (wdr85) (Dictyostelium discoideum (Social amoeba)).